A 132-amino-acid chain; its full sequence is MKGIAGRQTRGLPLGANITCADNTGARSISLIDVKAWHGKARRIPAAGVGDMFMASVKKGTPEMRSKVVYAVVIRQKRPYRRPDGTMVQFEDNAAVLVTPDGEVRGSEIKGPVAREAAERWPRIAAIASIIV.

The protein belongs to the universal ribosomal protein uL14 family. As to quaternary structure, part of the 50S ribosomal subunit. Forms a cluster with proteins L3 and L24e, part of which may contact the 16S rRNA in 2 intersubunit bridges.

Its function is as follows. Binds to 23S rRNA. Forms part of two intersubunit bridges in the 70S ribosome. In Thermoplasma acidophilum (strain ATCC 25905 / DSM 1728 / JCM 9062 / NBRC 15155 / AMRC-C165), this protein is Large ribosomal subunit protein uL14.